We begin with the raw amino-acid sequence, 271 residues long: Elongation factor Ts (271 aa).

Residues 76 to 79 (TDFV) are involved in Mg(2+) ion dislocation from EF-Tu.

The protein belongs to the EF-Ts family.

The protein resides in the cytoplasm. Its function is as follows. Associates with the EF-Tu.GDP complex and induces the exchange of GDP to GTP. It remains bound to the aminoacyl-tRNA.EF-Tu.GTP complex up to the GTP hydrolysis stage on the ribosome. This is Elongation factor Ts from Mycobacterium ulcerans (strain Agy99).